A 228-amino-acid polypeptide reads, in one-letter code: Cytokinin riboside 5'-monophosphate phosphoribohydrolase LOG5 (228 aa).

Residues Glu79, Arg97–Lys98, and Gly114–Glu120 contribute to the substrate site.

This sequence belongs to the LOG family. Expressed in roots and shoots. Detected in vascular tissues of roots, cotyledons, and leaves, axillary buds, immature and mature flowers, fruit abscission zones and ovules.

It localises to the cytoplasm. It is found in the nucleus. The enzyme catalyses N(6)-(dimethylallyl)adenosine 5'-phosphate + H2O = N(6)-dimethylallyladenine + D-ribose 5-phosphate. It catalyses the reaction 9-ribosyl-trans-zeatin 5'-phosphate + H2O = trans-zeatin + D-ribose 5-phosphate. Its function is as follows. Cytokinin-activating enzyme working in the direct activation pathway. Phosphoribohydrolase that converts inactive cytokinin nucleotides to the biologically active free-base forms. This chain is Cytokinin riboside 5'-monophosphate phosphoribohydrolase LOG5 (LOG5), found in Arabidopsis thaliana (Mouse-ear cress).